Reading from the N-terminus, the 146-residue chain is Putative pre-16S rRNA nuclease (146 aa).

Belongs to the YqgF nuclease family.

The protein localises to the cytoplasm. Its function is as follows. Could be a nuclease involved in processing of the 5'-end of pre-16S rRNA. The sequence is that of Putative pre-16S rRNA nuclease from Burkholderia mallei (strain SAVP1).